The sequence spans 294 residues: Picrinine-N-methytransferase TMT2 (294 aa).

Residues 75–84 (LLDVGCGLGG) form an SAM motif I region. The Vacuolar targeting signal signature appears at 137–143 (DGEFDVV). The interval 138 to 146 (GEFDVVFTL) is SAM motif II. The tract at residues 165 to 174 (VGSPGAAIVV) is SAM motif III.

It belongs to the class I-like SAM-binding methyltransferase superfamily. gTMT family. In terms of assembly, homodimer.

The protein localises to the vacuole membrane. The catalysed reaction is picrinine + S-adenosyl-L-methionine = ervincine + S-adenosyl-L-homocysteine + H(+). It participates in alkaloid biosynthesis; vindoline biosynthesis. In terms of biological role, S-adenosyl-L-methionine-dependent N-methyltransferase involved in the biosynthesis of biologically active monoterpenoid indole alkaloids (MIAs) natural products including vindoline. Catalyzes the conversion of picrinine to N-methylpicrinine (ervincine). This Catharanthus roseus (Madagascar periwinkle) protein is Picrinine-N-methytransferase TMT2.